The chain runs to 122 residues: Biogenesis of lysosome-related organelles complex 1 subunit BLS1 (122 aa).

The residue at position 33 (Ser-33) is a Phosphoserine.

The protein belongs to the BLOC1S1 family. Component of the biogenesis of lysosome-related organelles complex-1 (BLOC-1) composed of at least BLI1, BLS1, CNL1, KXD1, SNN1 and VAB2.

It is found in the endosome. Functionally, component of the biogenesis of lysosome-related organelles complex-1 (BLOC-1), a complex involved in endosomal cargo sorting. In Saccharomyces cerevisiae (strain RM11-1a) (Baker's yeast), this protein is Biogenesis of lysosome-related organelles complex 1 subunit BLS1 (BLS1).